We begin with the raw amino-acid sequence, 502 residues long: ATP synthase subunit alpha (502 aa).

The tract at residues 117–139 (GMGPVLTSKTRPIESPAPGVMDR) is disordered. 169–176 (GDRQTGKT) serves as a coordination point for ATP.

This sequence belongs to the ATPase alpha/beta chains family. F-type ATPases have 2 components, CF(1) - the catalytic core - and CF(0) - the membrane proton channel. CF(1) has five subunits: alpha(3), beta(3), gamma(1), delta(1), epsilon(1). CF(0) has three main subunits: a(1), b(2) and c(9-12). The alpha and beta chains form an alternating ring which encloses part of the gamma chain. CF(1) is attached to CF(0) by a central stalk formed by the gamma and epsilon chains, while a peripheral stalk is formed by the delta and b chains.

Its subcellular location is the cell membrane. It carries out the reaction ATP + H2O + 4 H(+)(in) = ADP + phosphate + 5 H(+)(out). Functionally, produces ATP from ADP in the presence of a proton gradient across the membrane. The alpha chain is a regulatory subunit. The polypeptide is ATP synthase subunit alpha (Bacillus licheniformis (strain ATCC 14580 / DSM 13 / JCM 2505 / CCUG 7422 / NBRC 12200 / NCIMB 9375 / NCTC 10341 / NRRL NRS-1264 / Gibson 46)).